Here is a 782-residue protein sequence, read N- to C-terminus: ATP-dependent 6-phosphofructokinase, muscle type (782 aa).

T2 carries the N-acetylthreonine modification. Residues 2 to 390 form an N-terminal catalytic PFK domain 1 region; the sequence is THEEHHAAKT…NWEVYKLLAH (389 aa). ATP contacts are provided by residues G25, 88–89, and 118–121; these read RC and GDGS. D119 is a Mg(2+) binding site. S133 carries the post-translational modification Phosphoserine. Residues 164-166, R201, 208-210, E264, R292, and 298-301 contribute to the substrate site; these read SID, MGR, and HVQR. The active-site Proton acceptor is the D166. Position 377 is a phosphoserine (S377). The segment at 391–403 is interdomain linker; it reads IRPPVSKTSATMH. The segment at 404–782 is C-terminal regulatory PFK domain 2; that stretch reads TVAVMNVGAP…SRKRSGETSI (379 aa). Residues R473 and 530 to 534 each bind beta-D-fructose 2,6-bisphosphate; that span reads TVSNN. O-linked (GlcNAc) serine glycosylation occurs at S532. At K559 the chain carries N6-(2-hydroxyisobutyryl)lysine. Beta-D-fructose 2,6-bisphosphate is bound by residues R568, 575–577, E631, R657, and 663–666; these read MGG and HMQQ. The residue at position 669 (S669) is a Phosphoserine. R737 is a binding site for beta-D-fructose 2,6-bisphosphate. S777 carries the phosphoserine modification.

It belongs to the phosphofructokinase type A (PFKA) family. ATP-dependent PFK group I subfamily. Eukaryotic two domain clade 'E' sub-subfamily. As to quaternary structure, homo- and heterotetramers. Phosphofructokinase (PFK) enzyme functions as a tetramer composed of different combinations of 3 types of subunits, called PFKM (M), PFKL (L) and PFKP (P). The composition of the PFK tetramer differs according to the tissue type it is present in. The kinetic and regulatory properties of the tetrameric enzyme are dependent on the subunit composition, hence can vary across tissues. Interacts (via C-terminus) with HK1 (via N-terminal spermatogenic cell-specific region). Requires Mg(2+) as cofactor. In terms of processing, glcNAcylation decreases enzyme activity.

The protein localises to the cytoplasm. It catalyses the reaction beta-D-fructose 6-phosphate + ATP = beta-D-fructose 1,6-bisphosphate + ADP + H(+). It functions in the pathway carbohydrate degradation; glycolysis; D-glyceraldehyde 3-phosphate and glycerone phosphate from D-glucose: step 3/4. Allosterically activated by ADP, AMP, or fructose 2,6-bisphosphate, and allosterically inhibited by ATP or citrate. In terms of biological role, catalyzes the phosphorylation of D-fructose 6-phosphate to fructose 1,6-bisphosphate by ATP, the first committing step of glycolysis. The sequence is that of ATP-dependent 6-phosphofructokinase, muscle type (PFKM) from Canis lupus familiaris (Dog).